The primary structure comprises 502 residues: Probable mitochondrial-processing peptidase subunit alpha (502 aa).

It belongs to the peptidase M16 family. In terms of assembly, heterodimer of mas2 (alpha) and mas1 (beta) subunits, forming the mitochondrial processing protease (MPP) in which mas2 is involved in substrate recognition and binding and mas1 is the catalytic subunit.

Its subcellular location is the mitochondrion matrix. In terms of biological role, substrate recognition and binding subunit of the essential mitochondrial processing protease (MPP), which cleaves the mitochondrial sequence off newly imported precursors proteins. The sequence is that of Probable mitochondrial-processing peptidase subunit alpha (mas2) from Schizosaccharomyces pombe (strain 972 / ATCC 24843) (Fission yeast).